The following is a 343-amino-acid chain: Aspartate carbamoyltransferase catalytic subunit (343 aa).

The segment covering M1–A14 has biased composition (polar residues). The segment at M1 to R20 is disordered. Residues R91 and T92 each coordinate carbamoyl phosphate. Residue K119 coordinates L-aspartate. Carbamoyl phosphate-binding residues include R141, H171, and Q174. L-aspartate is bound by residues R204 and R259. G300 and P301 together coordinate carbamoyl phosphate.

Belongs to the aspartate/ornithine carbamoyltransferase superfamily. ATCase family. As to quaternary structure, heterododecamer (2C3:3R2) of six catalytic PyrB chains organized as two trimers (C3), and six regulatory PyrI chains organized as three dimers (R2).

The catalysed reaction is carbamoyl phosphate + L-aspartate = N-carbamoyl-L-aspartate + phosphate + H(+). Its pathway is pyrimidine metabolism; UMP biosynthesis via de novo pathway; (S)-dihydroorotate from bicarbonate: step 2/3. Catalyzes the condensation of carbamoyl phosphate and aspartate to form carbamoyl aspartate and inorganic phosphate, the committed step in the de novo pyrimidine nucleotide biosynthesis pathway. The sequence is that of Aspartate carbamoyltransferase catalytic subunit from Burkholderia lata (strain ATCC 17760 / DSM 23089 / LMG 22485 / NCIMB 9086 / R18194 / 383).